The primary structure comprises 137 residues: Crustacean calcium-binding protein 23 (137 aa).

EF-hand domains lie at 27 to 48, 62 to 97, and 100 to 135; these read RDSS…FGLD, EKKA…KVVK, and ATEE…YSGL.

Monomer or disulfide-linked dimers.

Possibly acts as a regulatory protein and not as a calcium buffer or transport protein. This Homarus americanus (American lobster) protein is Crustacean calcium-binding protein 23.